The sequence spans 367 residues: Flagellar P-ring protein (367 aa).

The first 24 residues, M1–A24, serve as a signal peptide directing secretion.

Belongs to the FlgI family. In terms of assembly, the basal body constitutes a major portion of the flagellar organelle and consists of four rings (L,P,S, and M) mounted on a central rod.

It localises to the periplasm. It is found in the bacterial flagellum basal body. Assembles around the rod to form the L-ring and probably protects the motor/basal body from shearing forces during rotation. This is Flagellar P-ring protein from Syntrophotalea carbinolica (strain DSM 2380 / NBRC 103641 / GraBd1) (Pelobacter carbinolicus).